We begin with the raw amino-acid sequence, 309 residues long: THAP domain-containing protein 7 (309 aa).

The THAP-type zinc-finger motif lies at methionine 1–phenylalanine 93. Residues threonine 158–valine 209 form a disordered region. Serine 162 is modified (phosphoserine). Positions glutamate 198–valine 209 are enriched in pro residues. A Phosphoserine modification is found at serine 210. An HCFC1-binding motif (HBM) motif is present at residues glutamate 229–tyrosine 232.

In terms of assembly, forms homodimers. Interacts with HDAC3 and nuclear hormone receptor corepressors. Interacts via HBM with HCFC1.

The protein resides in the nucleus. It is found in the chromosome. Chromatin-associated, histone tail-binding protein that represses transcription via recruitment of HDAC3 and nuclear hormone receptor corepressors. This chain is THAP domain-containing protein 7 (THAP7), found in Homo sapiens (Human).